Reading from the N-terminus, the 146-residue chain is Large ribosomal subunit protein uL15 (146 aa).

Residues 1–10 show a composition bias toward basic and acidic residues; the sequence is MKLHELKPAE. A disordered region spans residues 1–51; the sequence is MKLHELKPAEGSRQVRNRVGRGTSSGNGKTAGRGQKGQKARSGGGVRLGFE. 2 stretches are compositionally biased toward gly residues: residues 23–35 and 42–51; these read TSSG…GRGQ and SGGGVRLGFE.

It belongs to the universal ribosomal protein uL15 family. As to quaternary structure, part of the 50S ribosomal subunit.

In terms of biological role, binds to the 23S rRNA. The chain is Large ribosomal subunit protein uL15 from Enterococcus faecalis (strain ATCC 700802 / V583).